A 618-amino-acid polypeptide reads, in one-letter code: Rho guanine nucleotide exchange factor 25 (618 aa).

Disordered regions lie at residues 26–63 (CAVPGQEGPPERDPLGPGSTKTESDCIEEDQTGQREPE) and 169–193 (GPGDKAQPAEEETLSQAPKNEEEQK). One can recognise a DH domain in the interval 199 to 375 (RSMFVLGELV…CFVPKRCNDM (177 aa)). Residues 317–338 (LGHRLQLNDLLIKPVQRIMKYQ) form an important for binding to Rho GTPases region. The PH domain occupies 387–505 (KLTAQGKLLG…WIKQVAQILE (119 aa)). The segment at 506 to 532 (SQRDFLNALQSPIEYQRRESQTNSLGR) is sufficient to bind activated GNAQ. Disordered stretches follow at residues 521 to 556 (QRRESQTNSLGRPGGPWVGSPGRMRPGDLAQASMHT) and 584 to 604 (ALSDTPQTPHDSPALPTVNTP). Polar residues predominate over residues 584–593 (ALSDTPQTPH).

Interacts with activated GNAQ and GNA11. Interacts (via the DH domain) with POPDC1 (via the C-terminus cytoplasmic tail). Interacts with RHOA, CDC42 and RAC1. In terms of tissue distribution, highly expressed in excitable tissues, such as brain, heart and muscle. Elevated expression in hippocampus and cerebellum.

Its subcellular location is the cytoplasm. The protein localises to the myofibril. It localises to the sarcomere. The protein resides in the cell membrane. In terms of biological role, may play a role in actin cytoskeleton reorganization in different tissues since its activation induces formation of actin stress fibers. It works as a guanine nucleotide exchange factor for Rho family of small GTPases. Links specifically G alpha q/11-coupled receptors to RHOA activation. May be an important regulator of processes involved in axon and dendrite formation. In neurons seems to be an exchange factor primarily for RAC1. Involved in skeletal myogenesis. This is Rho guanine nucleotide exchange factor 25 (Arhgef25) from Mus musculus (Mouse).